The sequence spans 345 residues: NADH-ubiquinone oxidoreductase chain 2 (345 aa).

The next 9 membrane-spanning stretches (helical) occupy residues 25–45 (HWLLAWMGLEINTLAIIPLMT), 60–80 (FLTQAAASALLLFSSLNNAWL), 99–119 (TIAICMKLGLAPFHFWLPEVL), 149–171 (LNTPLLLTLGLTSTLIGGWGGLN), 178–198 (ILAFSSIAHLGWMISILPFSP), 199–219 (QLMILNLTIYLIMTSTMFLVL), 242–262 (ALSLLTLLSLGGLPPLSGFVP), 282–302 (LALSALLSLFFYLRLTYIVTL), and 324–344 (LLLSIALILSSFIIPISPLTL).

The protein belongs to the complex I subunit 2 family. As to quaternary structure, core subunit of respiratory chain NADH dehydrogenase (Complex I) which is composed of 45 different subunits.

It localises to the mitochondrion inner membrane. It catalyses the reaction a ubiquinone + NADH + 5 H(+)(in) = a ubiquinol + NAD(+) + 4 H(+)(out). In terms of biological role, core subunit of the mitochondrial membrane respiratory chain NADH dehydrogenase (Complex I) which catalyzes electron transfer from NADH through the respiratory chain, using ubiquinone as an electron acceptor. Essential for the catalytic activity and assembly of complex I. The protein is NADH-ubiquinone oxidoreductase chain 2 (mt-nd2) of Xenopus laevis (African clawed frog).